A 410-amino-acid chain; its full sequence is Histone-lysine N-methyltransferase SUV39H2 (410 aa).

In terms of domain architecture, Chromo spans 47–105 (YEVEYLCDYKVVKDMEYYLVKWKGWPDSTNTWEPLQNLKCPLLLQQFSNDKHNYLSQVK). In terms of domain architecture, Pre-SET spans 189–247 (FGCSCTDCFFQKCCPAEAGVLLAYNKNQQIKIPPGTPIYECNSRCQCGPDCPNRIVQKG). Positions 191, 193, 196, 201, 202, 229, 233, 235, and 239 each coordinate Zn(2+). Positions 250–373 (YSLCIFRTSN…AGEELTFDYQ (124 aa)) constitute an SET domain. Residues 261–263 (RGW) and 330–331 (NH) each bind S-adenosyl-L-methionine. Residue Cys333 coordinates Zn(2+). An S-adenosyl-L-methionine-binding site is contributed by Tyr372. A phosphoserine mark is found at Ser381, Ser384, and Ser388. Residues 394–410 (VRTVCKCGAVTCRGYLN) enclose the Post-SET domain. Position 398 (Cys398) interacts with Zn(2+). An S-adenosyl-L-methionine-binding site is contributed by Lys399. Zn(2+) contacts are provided by Cys400 and Cys405.

It belongs to the class V-like SAM-binding methyltransferase superfamily. Histone-lysine methyltransferase family. Suvar3-9 subfamily. Interacts with SMAD5. The large PER complex involved in the histone methylation is composed of at least PER2, CBX3, TRIM28, SUV39H1 and/or SUV39H2; CBX3 mediates the formation of the complex. In terms of processing, ubiquitinated by the DCX(DCAF13) E3 ubiquitin ligase complex, leading to its degradation.

The protein localises to the nucleus. The protein resides in the chromosome. It is found in the centromere. The enzyme catalyses L-lysyl(9)-[histone H3] + 3 S-adenosyl-L-methionine = N(6),N(6),N(6)-trimethyl-L-lysyl(9)-[histone H3] + 3 S-adenosyl-L-homocysteine + 3 H(+). Its function is as follows. Histone methyltransferase that specifically trimethylates 'Lys-9' of histone H3 using monomethylated H3 'Lys-9' as substrate. H3 'Lys-9' trimethylation represents a specific tag for epigenetic transcriptional repression by recruiting HP1 (CBX1, CBX3 and/or CBX5) proteins to methylated histones. Mainly functions in heterochromatin regions, thereby playing a central role in the establishment of constitutive heterochromatin at pericentric and telomere regions. H3 'Lys-9' trimethylation is also required to direct DNA methylation at pericentric repeats. SUV39H1 is targeted to histone H3 via its interaction with RB1 and is involved in many processes, such as cell cycle regulation, transcriptional repression and regulation of telomere length. May participate in regulation of higher-order chromatin organization during spermatogenesis. Recruited by the large PER complex to the E-box elements of the circadian target genes such as PER2 itself or PER1, contributes to the conversion of local chromatin to a heterochromatin-like repressive state through H3 'Lys-9' trimethylation. The sequence is that of Histone-lysine N-methyltransferase SUV39H2 (SUV39H2) from Homo sapiens (Human).